The primary structure comprises 177 residues: NEDD8-conjugating enzyme ubc12 (177 aa).

Residues 23 to 167 enclose the UBC core domain; that stretch reads PAQIRIQKDV…VRTAMKGGLV (145 aa). Cys105 (glycyl thioester intermediate) is an active-site residue.

This sequence belongs to the ubiquitin-conjugating enzyme family. UBC12 subfamily.

It catalyses the reaction [E1 NEDD8-activating enzyme]-S-[NEDD8 protein]-yl-L-cysteine + [E2 NEDD8-conjugating enzyme]-L-cysteine = [E1 NEDD8-activating enzyme]-L-cysteine + [E2 NEDD8-conjugating enzyme]-S-[NEDD8-protein]-yl-L-cysteine.. It participates in protein modification; protein neddylation. Accepts the ubiquitin-like protein NEDD8/RUB1 from the UBA3-ULA1 E1 complex and catalyzes its covalent attachment to other proteins. This Schizosaccharomyces pombe (strain 972 / ATCC 24843) (Fission yeast) protein is NEDD8-conjugating enzyme ubc12 (ubc12).